Here is a 139-residue protein sequence, read N- to C-terminus: Transcription antitermination protein NusB (139 aa).

It belongs to the NusB family.

Involved in transcription antitermination. Required for transcription of ribosomal RNA (rRNA) genes. Binds specifically to the boxA antiterminator sequence of the ribosomal RNA (rrn) operons. The chain is Transcription antitermination protein NusB from Cronobacter sakazakii (strain ATCC BAA-894) (Enterobacter sakazakii).